We begin with the raw amino-acid sequence, 827 residues long: Leucine--tRNA ligase (827 aa).

The 'HIGH' region motif lies at 42–52; sequence PYPSGKLHMGH. Positions 583 to 587 match the 'KMSKS' region motif; that stretch reads KMSKS. Residue Lys-586 coordinates ATP.

Belongs to the class-I aminoacyl-tRNA synthetase family.

It localises to the cytoplasm. It catalyses the reaction tRNA(Leu) + L-leucine + ATP = L-leucyl-tRNA(Leu) + AMP + diphosphate. This is Leucine--tRNA ligase from Pelotomaculum thermopropionicum (strain DSM 13744 / JCM 10971 / SI).